Here is a 377-residue protein sequence, read N- to C-terminus: Nitric oxide reductase FlRd-NAD(+) reductase (377 aa).

It belongs to the FAD-dependent oxidoreductase family. The cofactor is FAD.

It localises to the cytoplasm. It catalyses the reaction 2 reduced [nitric oxide reductase rubredoxin domain] + NAD(+) + H(+) = 2 oxidized [nitric oxide reductase rubredoxin domain] + NADH. It functions in the pathway nitrogen metabolism; nitric oxide reduction. In terms of biological role, one of at least two accessory proteins for anaerobic nitric oxide (NO) reductase. Reduces the rubredoxin moiety of NO reductase. The protein is Nitric oxide reductase FlRd-NAD(+) reductase of Salmonella agona (strain SL483).